The chain runs to 885 residues: Protein PTHB1 (885 aa).

Residues 1 to 406 (MSLFKARDWW…LQGVWPLTEQ (406 aa)) are seven-bladed beta-propeller. Positions 684–764 (RDKTPAPLQH…FLPLQEDTQE (81 aa)) are interaction with LZTL1.

In terms of assembly, part of BBSome complex, that contains BBS1, BBS2, BBS4, BBS5, BBS7, BBS8/TTC8, BBS9 and BBIP10. Interacts with LZTL1; the interaction mediates the association of LZTL1 with the BBsome complex and regulates BBSome ciliary trafficking.

The protein localises to the cell projection. It localises to the cilium membrane. Its subcellular location is the cytoplasm. The protein resides in the cytoskeleton. It is found in the microtubule organizing center. The protein localises to the centrosome. It localises to the centriolar satellite. Functionally, the BBSome complex is thought to function as a coat complex required for sorting of specific membrane proteins to the primary cilia. The BBSome complex is required for ciliogenesis but is dispensable for centriolar satellite function. This ciliogenic function is mediated in part by the Rab8 GDP/GTP exchange factor, which localizes to the basal body and contacts the BBSome. Rab8(GTP) enters the primary cilium and promotes extension of the ciliary membrane. Firstly the BBSome associates with the ciliary membrane and binds to RAB3IP/Rabin8, the guanosyl exchange factor (GEF) for Rab8 and then the Rab8-GTP localizes to the cilium and promotes docking and fusion of carrier vesicles to the base of the ciliary membrane. Required for proper BBSome complex assembly and its ciliary localization. This chain is Protein PTHB1 (Bbs9), found in Mus musculus (Mouse).